The sequence spans 103 residues: Large ribosomal subunit protein bL21 (103 aa).

This sequence belongs to the bacterial ribosomal protein bL21 family. Part of the 50S ribosomal subunit. Contacts protein L20.

Its function is as follows. This protein binds to 23S rRNA in the presence of protein L20. The polypeptide is Large ribosomal subunit protein bL21 (Haemophilus influenzae (strain 86-028NP)).